Reading from the N-terminus, the 301-residue chain is ATP synthase gamma chain (301 aa).

Belongs to the ATPase gamma chain family. In terms of assembly, F-type ATPases have 2 components, CF(1) - the catalytic core - and CF(0) - the membrane proton channel. CF(1) has five subunits: alpha(3), beta(3), gamma(1), delta(1), epsilon(1). CF(0) has three main subunits: a, b and c.

The protein localises to the cell inner membrane. Its function is as follows. Produces ATP from ADP in the presence of a proton gradient across the membrane. The gamma chain is believed to be important in regulating ATPase activity and the flow of protons through the CF(0) complex. In Bordetella pertussis (strain Tohama I / ATCC BAA-589 / NCTC 13251), this protein is ATP synthase gamma chain.